The chain runs to 271 residues: 4-hydroxy-tetrahydrodipicolinate reductase (271 aa).

NAD(+) is bound by residues 11-16, E37, 102-104, and 126-129; these read GAAGRM, GTT, and AGNM. The active-site Proton donor/acceptor is H159. Residue H160 participates in (S)-2,3,4,5-tetrahydrodipicolinate binding. The Proton donor role is filled by K163. Residue 169 to 170 coordinates (S)-2,3,4,5-tetrahydrodipicolinate; that stretch reads GT.

This sequence belongs to the DapB family.

The protein resides in the cytoplasm. It carries out the reaction (S)-2,3,4,5-tetrahydrodipicolinate + NAD(+) + H2O = (2S,4S)-4-hydroxy-2,3,4,5-tetrahydrodipicolinate + NADH + H(+). It catalyses the reaction (S)-2,3,4,5-tetrahydrodipicolinate + NADP(+) + H2O = (2S,4S)-4-hydroxy-2,3,4,5-tetrahydrodipicolinate + NADPH + H(+). It participates in amino-acid biosynthesis; L-lysine biosynthesis via DAP pathway; (S)-tetrahydrodipicolinate from L-aspartate: step 4/4. Its function is as follows. Catalyzes the conversion of 4-hydroxy-tetrahydrodipicolinate (HTPA) to tetrahydrodipicolinate. The chain is 4-hydroxy-tetrahydrodipicolinate reductase from Parvibaculum lavamentivorans (strain DS-1 / DSM 13023 / NCIMB 13966).